The chain runs to 237 residues: Lectin alpha chain (237 aa).

Mn(2+)-binding residues include glutamate 8 and aspartate 10. Ca(2+) is bound by residues aspartate 10, tyrosine 12, asparagine 14, and aspartate 19. An a carbohydrate-binding site is contributed by tyrosine 12. Mn(2+) contacts are provided by aspartate 19, histidine 24, and serine 34. A carbohydrate is bound at residue 99–100 (LY). A Ca(2+)-binding site is contributed by aspartate 208. Arginine 228 contributes to the a carbohydrate binding site.

It belongs to the leguminous lectin family. Equilibrium between homodimer and homotetramer. Oligomerization is pH-dependent with homotetramers forming at pH 6.5 and above. In terms of processing, the beta and gamma chains are produced by partial proteolytic processing of the lectin alpha chain by an asparaginyl endopeptidase. Mixture of 60% alpha lectin and 40% of its beta and gamma proteolytic fragments. As to expression, seed.

It localises to the vacuole. The protein resides in the aleurone grain. D-mannose/D-glucose-binding lectin. Induces histamine release in mast cells from hamster and rat. Induces lymphocyte proliferation and IFNG production. This is Lectin alpha chain from Macropsychanthus bicolor (Dioclea rostrata).